The primary structure comprises 732 residues: MAAGSPSPDGMPSSPHMANTGSTPKPTALFNRLNAVLSTSYTDPDIRDSLETLDKRGLQNTAETRRTLRLDIQKEVIDSNGSIIQDFGKVAEQLSRIGAAISHLNTICEDMRQHITSARQETEPVLEEAAALLSQKQEVETKQHLLDAFNKHFVLSSDDISILTSTAEPVDDRFFQILSRQKRIHKDCEVLLGGENQRLGLEIMEQSSKNLNSAFMKLYKWIQKEFKSSNLEDPQMGSSIRKGLRVLAERPTLFHSCLDFFAEAREYILSDSFHYALTAAVSGDRLDANAKPIEFSAHDPLRYVGDMLAWVHSATVSEREALEALFISDGGELVKGIEAGISSEPWSRINDEQSVFDGEKALKELVTRDMSGVARSLKQRVELAVQGHDELVTLYKIMNLLAFYESTFSKLVGHDSALVEAITSLQDFVFKRLEAVIHDQIATITGDPSGLIPPDDLSAPEFLTDAIDNLVPLMKAYDSSFRHDITDDTSQNENKFSPIIRATLDPFLDLAEKSSTALSNFTSRTIYQTNSILVIRDAISPFPFACATHLPRLSSTLTSLKTNLLDIQHDFLLRETGLQTLTAALEPFMPKSTSESSTGNGLSRNLADIASLPEFQPESLSTISQQLDDFLPSALVDATDNLKRIHSPGLVKNATEEAVEAFCCDFELVESMIVGADEAREKMSVAGTVSSSAAGKEMDEIAALGETSGQVGAWSLRVLFPRTTGEIRVLLS.

Low complexity predominate over residues 1-15; sequence MAAGSPSPDGMPSSP. The segment at 1 to 27 is disordered; it reads MAAGSPSPDGMPSSPHMANTGSTPKPT. Over residues 16–25 the composition is skewed to polar residues; the sequence is HMANTGSTPK.

The protein belongs to the COG6 family.

It localises to the golgi apparatus membrane. In terms of biological role, acts as a component of the peripheral membrane COG complex that is involved in intra-Golgi protein trafficking. COG is located at the cis-Golgi, and regulates tethering of retrograde intra-Golgi vesicles and possibly a number of other membrane trafficking events. This Coccidioides immitis (strain RS) (Valley fever fungus) protein is Conserved oligomeric Golgi complex subunit 6 (COG6).